The chain runs to 838 residues: Extragenic suppressor of kinetochore protein 1 (838 aa).

Ser-411 and Ser-418 each carry phosphoserine. The segment at 411–468 (SDEDDDDSTFSDKNSKDFKETEDMNGAEDMHGRAPQITKDNLNLTTTDSPMSEAEPVS) is disordered. Phosphothreonine is present on Thr-419. Over residues 423 to 442 (KNSKDFKETEDMNGAEDMHG) the composition is skewed to basic and acidic residues. 4 positions are modified to phosphoserine: Ser-425, Ser-459, Ser-468, and Ser-491. Residues 448–460 (TKDNLNLTTTDSP) are compositionally biased toward polar residues. At Thr-493 the chain carries Phosphothreonine. Residue Ser-494 is modified to Phosphoserine. Acidic residues predominate over residues 690-700 (ELESNSSDDDV). 2 disordered regions span residues 690–745 (ELES…DQDN) and 757–838 (ISDN…NHGK). 2 positions are modified to phosphoserine: Ser-711 and Ser-713. The segment covering 714–723 (NDEDDGNDED) has biased composition (acidic residues). The span at 724-734 (PLSREMSRRLS) shows a compositional bias: basic and acidic residues. Acidic residues-rich tracts occupy residues 768 to 779 (SDEDDDDDDEVV) and 806 to 818 (SDSE…DSSD).

Belongs to the SAPS family. In terms of assembly, interacts with ppe1 and mis12.

It localises to the nucleus. In terms of biological role, has a role in chromosome segregation. May provide a dynamic connection between kinetochore microtubules and kinetochore chromatin. The protein is Extragenic suppressor of kinetochore protein 1 (ekc1) of Schizosaccharomyces pombe (strain 972 / ATCC 24843) (Fission yeast).